A 364-amino-acid polypeptide reads, in one-letter code: Chorismate synthase (364 aa).

Arginine 47 contributes to the NADP(+) binding site. FMN-binding positions include arginine 125–serine 127, glycine 285, lysine 300–serine 304, and arginine 327.

The protein belongs to the chorismate synthase family. Homotetramer. FMNH2 is required as a cofactor.

It carries out the reaction 5-O-(1-carboxyvinyl)-3-phosphoshikimate = chorismate + phosphate. It participates in metabolic intermediate biosynthesis; chorismate biosynthesis; chorismate from D-erythrose 4-phosphate and phosphoenolpyruvate: step 7/7. Catalyzes the anti-1,4-elimination of the C-3 phosphate and the C-6 proR hydrogen from 5-enolpyruvylshikimate-3-phosphate (EPSP) to yield chorismate, which is the branch point compound that serves as the starting substrate for the three terminal pathways of aromatic amino acid biosynthesis. This reaction introduces a second double bond into the aromatic ring system. The sequence is that of Chorismate synthase from Dehalococcoides mccartyi (strain ATCC BAA-2266 / KCTC 15142 / 195) (Dehalococcoides ethenogenes (strain 195)).